The chain runs to 126 residues: Protein ApaG (126 aa).

The 125-residue stretch at 2–126 folds into the ApaG domain; it reads SALDNSIRVE…FRLATPGLLH (125 aa).

The protein is Protein ApaG of Shewanella oneidensis (strain ATCC 700550 / JCM 31522 / CIP 106686 / LMG 19005 / NCIMB 14063 / MR-1).